Reading from the N-terminus, the 199-residue chain is Imidazole glycerol phosphate synthase subunit HisH 2 (199 aa).

The 199-residue stretch at 1 to 199 folds into the Glutamine amidotransferase type-1 domain; the sequence is MIAVIDVSGN…NNFLSLESTC (199 aa). Catalysis depends on C76, which acts as the Nucleophile. Residues H177 and E179 contribute to the active site.

In terms of assembly, heterodimer of HisH and HisF.

The protein localises to the cytoplasm. The catalysed reaction is 5-[(5-phospho-1-deoxy-D-ribulos-1-ylimino)methylamino]-1-(5-phospho-beta-D-ribosyl)imidazole-4-carboxamide + L-glutamine = D-erythro-1-(imidazol-4-yl)glycerol 3-phosphate + 5-amino-1-(5-phospho-beta-D-ribosyl)imidazole-4-carboxamide + L-glutamate + H(+). It catalyses the reaction L-glutamine + H2O = L-glutamate + NH4(+). It functions in the pathway amino-acid biosynthesis; L-histidine biosynthesis; L-histidine from 5-phospho-alpha-D-ribose 1-diphosphate: step 5/9. Its function is as follows. IGPS catalyzes the conversion of PRFAR and glutamine to IGP, AICAR and glutamate. The HisH subunit provides the glutamine amidotransferase activity that produces the ammonia necessary to HisF for the synthesis of IGP and AICAR. In Legionella pneumophila subsp. pneumophila (strain Philadelphia 1 / ATCC 33152 / DSM 7513), this protein is Imidazole glycerol phosphate synthase subunit HisH 2.